Here is a 164-residue protein sequence, read N- to C-terminus: Ribosome maturation factor RimP (164 aa).

This sequence belongs to the RimP family.

It localises to the cytoplasm. In terms of biological role, required for maturation of 30S ribosomal subunits. This Mycoplasma mycoides subsp. mycoides SC (strain CCUG 32753 / NCTC 10114 / PG1) protein is Ribosome maturation factor RimP.